Reading from the N-terminus, the 136-residue chain is Ribulose bisphosphate carboxylase small subunit, chloroplastic 1 (136 aa).

The N-terminal 13 residues, 1 to 13 (NTDITSNGERVKC), are a transit peptide targeting the chloroplast.

Belongs to the RuBisCO small chain family. As to quaternary structure, heterohexadecamer of 8 large and 8 small subunits.

It is found in the plastid. Its subcellular location is the chloroplast. Functionally, ruBisCO catalyzes two reactions: the carboxylation of D-ribulose 1,5-bisphosphate, the primary event in carbon dioxide fixation, as well as the oxidative fragmentation of the pentose substrate. Both reactions occur simultaneously and in competition at the same active site. Although the small subunit is not catalytic it is essential for maximal activity. The chain is Ribulose bisphosphate carboxylase small subunit, chloroplastic 1 from Pisum sativum (Garden pea).